Here is a 500-residue protein sequence, read N- to C-terminus: L-arabinose isomerase (500 aa).

Mn(2+) contacts are provided by E306, E333, H350, and H450.

The protein belongs to the arabinose isomerase family. Homohexamer. Mn(2+) is required as a cofactor.

The catalysed reaction is beta-L-arabinopyranose = L-ribulose. The protein operates within carbohydrate degradation; L-arabinose degradation via L-ribulose; D-xylulose 5-phosphate from L-arabinose (bacterial route): step 1/3. Functionally, catalyzes the conversion of L-arabinose to L-ribulose. This is L-arabinose isomerase from Shigella dysenteriae serotype 1 (strain Sd197).